We begin with the raw amino-acid sequence, 323 residues long: tRNA U34 carboxymethyltransferase (323 aa).

Residues lysine 91, tryptophan 105, lysine 110, glycine 130, 181-182 (IE), methionine 196, tyrosine 200, and arginine 315 each bind carboxy-S-adenosyl-L-methionine.

This sequence belongs to the class I-like SAM-binding methyltransferase superfamily. CmoB family. In terms of assembly, homotetramer.

The enzyme catalyses carboxy-S-adenosyl-L-methionine + 5-hydroxyuridine(34) in tRNA = 5-carboxymethoxyuridine(34) in tRNA + S-adenosyl-L-homocysteine + H(+). In terms of biological role, catalyzes carboxymethyl transfer from carboxy-S-adenosyl-L-methionine (Cx-SAM) to 5-hydroxyuridine (ho5U) to form 5-carboxymethoxyuridine (cmo5U) at position 34 in tRNAs. This chain is tRNA U34 carboxymethyltransferase, found in Yersinia pseudotuberculosis serotype O:1b (strain IP 31758).